The primary structure comprises 98 residues: Small ribosomal subunit protein eS24 (98 aa).

Belongs to the eukaryotic ribosomal protein eS24 family. As to quaternary structure, part of the 30S ribosomal subunit.

The sequence is that of Small ribosomal subunit protein eS24 from Thermococcus kodakarensis (strain ATCC BAA-918 / JCM 12380 / KOD1) (Pyrococcus kodakaraensis (strain KOD1)).